Here is a 420-residue protein sequence, read N- to C-terminus: Enolase (420 aa).

Residue Gln-162 participates in (2R)-2-phosphoglycerate binding. The active-site Proton donor is Glu-206. 3 residues coordinate Mg(2+): Asp-241, Glu-282, and Asp-308. Residues Lys-333, Arg-362, Ser-363, and Lys-384 each contribute to the (2R)-2-phosphoglycerate site. Residue Lys-333 is the Proton acceptor of the active site.

The protein belongs to the enolase family. It depends on Mg(2+) as a cofactor.

It is found in the cytoplasm. The protein resides in the secreted. Its subcellular location is the cell surface. The enzyme catalyses (2R)-2-phosphoglycerate = phosphoenolpyruvate + H2O. It participates in carbohydrate degradation; glycolysis; pyruvate from D-glyceraldehyde 3-phosphate: step 4/5. In terms of biological role, catalyzes the reversible conversion of 2-phosphoglycerate (2-PG) into phosphoenolpyruvate (PEP). It is essential for the degradation of carbohydrates via glycolysis. The protein is Enolase of Methanothrix thermoacetophila (strain DSM 6194 / JCM 14653 / NBRC 101360 / PT) (Methanosaeta thermophila).